Reading from the N-terminus, the 257-residue chain is Imidazole glycerol phosphate synthase subunit HisF (257 aa).

Active-site residues include aspartate 12 and aspartate 131.

This sequence belongs to the HisA/HisF family. As to quaternary structure, heterodimer of HisH and HisF.

Its subcellular location is the cytoplasm. It catalyses the reaction 5-[(5-phospho-1-deoxy-D-ribulos-1-ylimino)methylamino]-1-(5-phospho-beta-D-ribosyl)imidazole-4-carboxamide + L-glutamine = D-erythro-1-(imidazol-4-yl)glycerol 3-phosphate + 5-amino-1-(5-phospho-beta-D-ribosyl)imidazole-4-carboxamide + L-glutamate + H(+). The protein operates within amino-acid biosynthesis; L-histidine biosynthesis; L-histidine from 5-phospho-alpha-D-ribose 1-diphosphate: step 5/9. Its function is as follows. IGPS catalyzes the conversion of PRFAR and glutamine to IGP, AICAR and glutamate. The HisF subunit catalyzes the cyclization activity that produces IGP and AICAR from PRFAR using the ammonia provided by the HisH subunit. The protein is Imidazole glycerol phosphate synthase subunit HisF of Nocardia farcinica (strain IFM 10152).